The chain runs to 944 residues: Thyroid peroxidase (944 aa).

A signal peptide spans 1 to 30 (MVGLVPAGSAWGGRALAVLGVTLLVALARG). Residues 31–858 (LLPFFLGGRD…SGRLPKASLV (828 aa)) are Extracellular-facing. Residue asparagine 141 is glycosylated (N-linked (GlcNAc...) asparagine). Cysteines 154 and 170 form a disulfide. Aspartate 250 provides a ligand contact to heme b. Catalysis depends on histidine 251, which acts as the Proton acceptor. Aspartate 252 is a Ca(2+) binding site. 2 disulfide bridges follow: cysteine 271–cysteine 281 and cysteine 275–cysteine 295. N-linked (GlcNAc...) asparagine glycosylation occurs at asparagine 316. 4 residues coordinate Ca(2+): threonine 330, phenylalanine 332, aspartate 334, and serine 336. A glycan (N-linked (GlcNAc...) asparagine) is linked at asparagine 351. The heme b site is built by glutamate 408 and histidine 503. Disulfide bonds link cysteine 606-cysteine 663, cysteine 704-cysteine 729, cysteine 750-cysteine 790, cysteine 776-cysteine 802, cysteine 808-cysteine 822, cysteine 816-cysteine 831, and cysteine 833-cysteine 846. Asparagine 623 carries an N-linked (GlcNAc...) asparagine glycan. The Sushi domain occupies 748 to 804 (DACGLPDSLDNGDVVLCGEAGRRVLVFSCRHGFKLQGPEQVACSPRGGAVRAPVCRD). Residues 804–847 (DINECEDASHPPCHGSARCRNTKGGFRCECTDPAVLGEDGTTCV) enclose the EGF-like; calcium-binding domain. A helical membrane pass occupies residues 859–879 (SIALGIVLVVGLAGLTWTLVC). Topologically, residues 880–944 (RWAHAGRKAS…RSHVAQGSPA (65 aa)) are cytoplasmic. The disordered stretch occupies residues 895 to 944 (LGGRGAPPPGRGAGQDGASGSLVPPLGPQGRTRAVDPTSSRSHVAQGSPA). The span at 931 to 944 (PTSSRSHVAQGSPA) shows a compositional bias: polar residues.

Belongs to the peroxidase family. XPO subfamily. As to quaternary structure, interacts with DUOX1, DUOX2 and CYBA. Ca(2+) is required as a cofactor. Heme b serves as cofactor. Heme is covalently bound through a H(2)O(2)-dependent autocatalytic process. Heme insertion is important for the delivery of protein at the cell surface. In terms of processing, cleaved in its N-terminal part.

Its subcellular location is the membrane. It catalyses the reaction 2 iodide + H2O2 + 2 H(+) = diiodine + 2 H2O. The enzyme catalyses [thyroglobulin]-L-tyrosine + iodide + H2O2 + H(+) = [thyroglobulin]-3-iodo-L-tyrosine + 2 H2O. It carries out the reaction [thyroglobulin]-3-iodo-L-tyrosine + iodide + H2O2 + H(+) = [thyroglobulin]-3,5-diiodo-L-tyrosine + 2 H2O. The catalysed reaction is 2 [thyroglobulin]-3,5-diiodo-L-tyrosine + H2O2 = [thyroglobulin]-L-thyroxine + [thyroglobulin]-dehydroalanine + 2 H2O. It catalyses the reaction [thyroglobulin]-3-iodo-L-tyrosine + [thyroglobulin]-3,5-diiodo-L-tyrosine + H2O2 = [thyroglobulin]-3,3',5-triiodo-L-thyronine + [thyroglobulin]-dehydroalanine + 2 H2O. Its pathway is hormone biosynthesis; thyroid hormone biosynthesis. Iodination and coupling of the hormonogenic tyrosines in thyroglobulin to yield the thyroid hormones T(3) and T(4). The polypeptide is Thyroid peroxidase (TPO) (Canis lupus familiaris (Dog)).